We begin with the raw amino-acid sequence, 323 residues long: Aspartate carbamoyltransferase catalytic subunit (323 aa).

Carbamoyl phosphate-binding residues include Arg-71 and Thr-72. Lys-99 provides a ligand contact to L-aspartate. Carbamoyl phosphate contacts are provided by Arg-121, His-151, and Gln-154. L-aspartate-binding residues include Arg-184 and Arg-239. Carbamoyl phosphate-binding residues include Gly-280 and Pro-281.

The protein belongs to the aspartate/ornithine carbamoyltransferase superfamily. ATCase family. Heterododecamer (2C3:3R2) of six catalytic PyrB chains organized as two trimers (C3), and six regulatory PyrI chains organized as three dimers (R2).

It catalyses the reaction carbamoyl phosphate + L-aspartate = N-carbamoyl-L-aspartate + phosphate + H(+). The protein operates within pyrimidine metabolism; UMP biosynthesis via de novo pathway; (S)-dihydroorotate from bicarbonate: step 2/3. In terms of biological role, catalyzes the condensation of carbamoyl phosphate and aspartate to form carbamoyl aspartate and inorganic phosphate, the committed step in the de novo pyrimidine nucleotide biosynthesis pathway. This chain is Aspartate carbamoyltransferase catalytic subunit, found in Cupriavidus pinatubonensis (strain JMP 134 / LMG 1197) (Cupriavidus necator (strain JMP 134)).